We begin with the raw amino-acid sequence, 150 residues long: Arginine repressor (150 aa).

The protein belongs to the ArgR family.

The protein resides in the cytoplasm. It functions in the pathway amino-acid biosynthesis; L-arginine biosynthesis [regulation]. In terms of biological role, regulates arginine biosynthesis genes. This is Arginine repressor from Clostridium botulinum (strain Loch Maree / Type A3).